We begin with the raw amino-acid sequence, 326 residues long: L-lactate dehydrogenase (326 aa).

An NAD(+)-binding site is contributed by 39 to 60; it reads DVVTGMPEGKALDDSQATSIAD. Substrate-binding residues include Arg-99, Asn-131, and Arg-162. Residue Asn-131 participates in NAD(+) binding. The active-site Proton acceptor is the His-186.

This sequence belongs to the LDH/MDH superfamily. LDH family. Homotetramer.

It carries out the reaction (S)-lactate + NAD(+) = pyruvate + NADH + H(+). Its pathway is fermentation; pyruvate fermentation to lactate; (S)-lactate from pyruvate: step 1/1. The chain is L-lactate dehydrogenase from Toxoplasma gondii.